Consider the following 131-residue polypeptide: Large-conductance mechanosensitive channel (131 aa).

2 helical membrane-spanning segments follow: residues 14 to 34 and 67 to 87; these read VIDLAVGVIIGGAFGKIVTSL and GSFIQTVIDFLIISFSIFIFI.

It belongs to the MscL family. Homopentamer.

It is found in the cell membrane. Channel that opens in response to stretch forces in the membrane lipid bilayer. May participate in the regulation of osmotic pressure changes within the cell. The polypeptide is Large-conductance mechanosensitive channel (Bacillus pumilus (strain SAFR-032)).